A 317-amino-acid chain; its full sequence is MSVQGPQRRLLGSLNSTSPAAPRLGLAANQTGPRCLEVSVPDGLFLSLGLVSVVENVLVVAAIAKNRNLHSPMYYFICCLAVSDLLVSVSSVLETAVMLLLEAGTLAGRAAVVQQLDDVIDVLVCGAMVSSLCFLGAIAVDRYISIFYALRYHSIVTLPRAWRAISAIWVASVLSSTLFIAYYDHTAVLLCLVSFFVAMLVLMAVLYVHMLARACQHARGIARLHKRQRPVHQGLGLKGAATLTILLGIFFLCWGPFFLHLSLMVLCPRHPICGCVFKNFNLFLTLIICNSIVDPLIYAFRSQELRKTLQEVLLCSW.

Residues 1 to 37 (MSVQGPQRRLLGSLNSTSPAAPRLGLAANQTGPRCLE) are Extracellular-facing. Asn15 and Asn29 each carry an N-linked (GlcNAc...) asparagine glycan. A helical membrane pass occupies residues 38–63 (VSVPDGLFLSLGLVSVVENVLVVAAI). Topologically, residues 64 to 72 (AKNRNLHSP) are cytoplasmic. Residues 73-93 (MYYFICCLAVSDLLVSVSSVL) form a helical membrane-spanning segment. The Extracellular portion of the chain corresponds to 94–118 (ETAVMLLLEAGTLAGRAAVVQQLDD). A helical membrane pass occupies residues 119–140 (VIDVLVCGAMVSSLCFLGAIAV). Residues 141-163 (DRYISIFYALRYHSIVTLPRAWR) lie on the Cytoplasmic side of the membrane. The helical transmembrane segment at 164-183 (AISAIWVASVLSSTLFIAYY) threads the bilayer. At 184 to 191 (DHTAVLLC) the chain is on the extracellular side. Residues 192-211 (LVSFFVAMLVLMAVLYVHML) form a helical membrane-spanning segment. Residues 212 to 240 (ARACQHARGIARLHKRQRPVHQGLGLKGA) lie on the Cytoplasmic side of the membrane. Residues 241 to 266 (ATLTILLGIFFLCWGPFFLHLSLMVL) traverse the membrane as a helical segment. The Extracellular segment spans residues 267–279 (CPRHPICGCVFKN). The chain crosses the membrane as a helical span at residues 280–300 (FNLFLTLIICNSIVDPLIYAF). Residues 301–317 (RSQELRKTLQEVLLCSW) are Cytoplasmic-facing. Cys315 is lipidated: S-palmitoyl cysteine.

This sequence belongs to the G-protein coupled receptor 1 family. As to quaternary structure, interacts with MGRN1, but does not undergo MGRN1-mediated ubiquitination; this interaction competes with GNAS-binding and thus inhibits agonist-induced cAMP production. Interacts with OPN3; the interaction results in a decrease in MC1R-mediated cAMP signaling and ultimately a decrease in melanin production in melanocytes.

It is found in the cell membrane. In terms of biological role, receptor for MSH (alpha, beta and gamma) and ACTH. The activity of this receptor is mediated by G proteins which activate adenylate cyclase. Mediates melanogenesis, the production of eumelanin (black/brown) and phaeomelanin (red/yellow), via regulation of cAMP signaling in melanocytes. The chain is Melanocyte-stimulating hormone receptor (MC1R) from Panthera onca (Jaguar).